Reading from the N-terminus, the 742-residue chain is Phosphoribosylformylglycinamidine synthase subunit PurL (742 aa).

Residue His54 is part of the active site. ATP-binding residues include Tyr57 and Lys96. A Mg(2+)-binding site is contributed by Glu98. Residues Ser99 to His102 and Arg121 each bind substrate. The Proton acceptor role is filled by His100. Asp122 contributes to the Mg(2+) binding site. Substrate is bound at residue Gln245. Asp273 contacts Mg(2+). Glu317–Gln319 contacts substrate. Residues Asp500 and Gly537 each contribute to the ATP site. Mg(2+) is bound at residue Asn538. Residue Ser540 participates in substrate binding.

Belongs to the FGAMS family. In terms of assembly, monomer. Part of the FGAM synthase complex composed of 1 PurL, 1 PurQ and 2 PurS subunits.

It is found in the cytoplasm. It catalyses the reaction N(2)-formyl-N(1)-(5-phospho-beta-D-ribosyl)glycinamide + L-glutamine + ATP + H2O = 2-formamido-N(1)-(5-O-phospho-beta-D-ribosyl)acetamidine + L-glutamate + ADP + phosphate + H(+). It participates in purine metabolism; IMP biosynthesis via de novo pathway; 5-amino-1-(5-phospho-D-ribosyl)imidazole from N(2)-formyl-N(1)-(5-phospho-D-ribosyl)glycinamide: step 1/2. Its function is as follows. Part of the phosphoribosylformylglycinamidine synthase complex involved in the purines biosynthetic pathway. Catalyzes the ATP-dependent conversion of formylglycinamide ribonucleotide (FGAR) and glutamine to yield formylglycinamidine ribonucleotide (FGAM) and glutamate. The FGAM synthase complex is composed of three subunits. PurQ produces an ammonia molecule by converting glutamine to glutamate. PurL transfers the ammonia molecule to FGAR to form FGAM in an ATP-dependent manner. PurS interacts with PurQ and PurL and is thought to assist in the transfer of the ammonia molecule from PurQ to PurL. The polypeptide is Phosphoribosylformylglycinamidine synthase subunit PurL (Geobacillus thermodenitrificans (strain NG80-2)).